Consider the following 318-residue polypeptide: Acetaldehyde dehydrogenase 1 (318 aa).

15–18 provides a ligand contact to NAD(+); the sequence is SGNI. The active-site Acyl-thioester intermediate is Cys-133. Residues 164 to 172 and Asn-289 each bind NAD(+); that span reads SAGPGTRAN.

Belongs to the acetaldehyde dehydrogenase family.

It carries out the reaction acetaldehyde + NAD(+) + CoA = acetyl-CoA + NADH + H(+). The polypeptide is Acetaldehyde dehydrogenase 1 (xylQ) (Azotobacter vinelandii (strain DJ / ATCC BAA-1303)).